Here is a 353-residue protein sequence, read N- to C-terminus: MSCQESSPGPPGDITPFQQMMASCSGAIITSLLVTPLDVVKIRLQAQKNPFPKGKCFVYCNGLMDHICVCENGNTKVWYKAPGHFSGTLDAFLKIIRMEGIRSLWSGLPPTLIMAVPATVIYFTCYDQLFALLKLKMGDRSDLAPLFAGAIARVGSATVISPLELIRTKMQSEKQSYREMSAVIRSALKNEGLRSLWRGWGPTLLRDVPFSAMYWFNYEKGKWWLCKRYSCSEPTVAITFTAGALSGSIASIITLPFDVVKTKRQVEMGELQTMKLSTQVSSSTCSVMKRIVAENGVSGLFAGFMPRLIKVAPACAIMISTYEFGKAFFRKYNHQKEGQATASQHIISHTEKH.

Solcar repeat units follow at residues 14-132 (ITPF…LFAL), 140-224 (RSDL…GKWW), and 234-328 (PTVA…GKAF). The next 6 helical transmembrane spans lie at 20–40 (MMAS…LDVV), 104–124 (LWSG…IYFT), 143–163 (LAPL…ISPL), 200–221 (WGPT…YEKG), 237–257 (AITF…TLPF), and 299–319 (GLFA…AIMI).

The protein belongs to the mitochondrial carrier (TC 2.A.29) family.

The protein resides in the mitochondrion inner membrane. It carries out the reaction glutathione(in) = glutathione(out). In terms of biological role, probable mitochondrial transporter required for glutathione import into mitochondria. Glutathione, which plays key roles in oxidative metabolism, is produced exclusively in the cytosol and is imported in many organelles. Mitochondrial glutathione is required for the activity and stability of proteins containing iron-sulfur clusters. The sequence is that of Mitochondrial glutathione transporter SLC25A40 from Danio rerio (Zebrafish).